We begin with the raw amino-acid sequence, 192 residues long: Peptide methionine sulfoxide reductase MsrA 1 (192 aa).

Cys25 is a catalytic residue.

This sequence belongs to the MsrA Met sulfoxide reductase family.

It catalyses the reaction L-methionyl-[protein] + [thioredoxin]-disulfide + H2O = L-methionyl-(S)-S-oxide-[protein] + [thioredoxin]-dithiol. It carries out the reaction [thioredoxin]-disulfide + L-methionine + H2O = L-methionine (S)-S-oxide + [thioredoxin]-dithiol. Its function is as follows. Has an important function as a repair enzyme for proteins that have been inactivated by oxidation. Catalyzes the reversible oxidation-reduction of methionine sulfoxide in proteins to methionine. This Rhodopirellula baltica (strain DSM 10527 / NCIMB 13988 / SH1) protein is Peptide methionine sulfoxide reductase MsrA 1.